A 176-amino-acid chain; its full sequence is MDAAFVITPMGVLTITDTLYDDLDISIMDFIGPYIIGNIKIVQIDVRDIKYSDMQKCYFSYKGKIVPQDSNDLARFNIYSICTAYRSKNTIIIACDYDIMLDIEGKHQPFYLFPSIDVFNATIIEAYNLYTAGDYHLIINPSDNLKMKLSFNSSFCISDGNGWIIIDGKCNSNFLS.

Belongs to the orthopoxvirus OPG163 family.

The protein localises to the host endosome. Mildly affects the expression of MHC class II molecules on the surface of host antigen presenting cells (APCs). This Cynomys gunnisoni (Gunnison's prairie dog) protein is Protein OPG163 (OPG163).